A 204-amino-acid polypeptide reads, in one-letter code: Lymphotoxin-alpha (204 aa).

The N-terminal stretch at 1 to 33 (MTPPGRLYLRRVCSTPILLLLGLLLALPPEAQG) is a signal peptide. One can recognise a THD domain in the interval 62 to 204 (PAAHLVGDPS…SSVFFGAFAL (143 aa)). An N-linked (GlcNAc...) asparagine glycan is attached at Asn-95. Cys-119 and Cys-155 are disulfide-bonded.

The protein belongs to the tumor necrosis factor family. In terms of assembly, homotrimer, and heterotrimer of either two LTB and one LTA subunits or (less prevalent) two LTA and one LTB subunits. Interacts with TNFRSF14.

Its subcellular location is the secreted. It localises to the membrane. Cytokine that in its homotrimeric form binds to TNFRSF1A/TNFR1, TNFRSF1B/TNFBR and TNFRSF14/HVEM. In its heterotrimeric form with LTB binds to TNFRSF3/LTBR. Lymphotoxin is produced by lymphocytes and is cytotoxic for a wide range of tumor cells in vitro and in vivo. This Sus scrofa (Pig) protein is Lymphotoxin-alpha (LTA).